The primary structure comprises 275 residues: Large ribosomal subunit protein uL2 (275 aa).

Disordered stretches follow at residues 28-49 (APHAALVESQSRSGGRNHHGRI) and 224-246 (AMNPVDHPHGGGEAKAGQGNPHP).

The protein belongs to the universal ribosomal protein uL2 family. In terms of assembly, part of the 50S ribosomal subunit. Forms a bridge to the 30S subunit in the 70S ribosome.

Its function is as follows. One of the primary rRNA binding proteins. Required for association of the 30S and 50S subunits to form the 70S ribosome, for tRNA binding and peptide bond formation. It has been suggested to have peptidyltransferase activity; this is somewhat controversial. Makes several contacts with the 16S rRNA in the 70S ribosome. The polypeptide is Large ribosomal subunit protein uL2 (Stenotrophomonas maltophilia (strain R551-3)).